Here is a 209-residue protein sequence, read N- to C-terminus: Large ribosomal subunit protein uL3 (209 aa).

Residue Gln150 is modified to N5-methylglutamine.

The protein belongs to the universal ribosomal protein uL3 family. In terms of assembly, part of the 50S ribosomal subunit. Forms a cluster with proteins L14 and L19. Post-translationally, methylated by PrmB.

Functionally, one of the primary rRNA binding proteins, it binds directly near the 3'-end of the 23S rRNA, where it nucleates assembly of the 50S subunit. This Vibrio parahaemolyticus serotype O3:K6 (strain RIMD 2210633) protein is Large ribosomal subunit protein uL3.